The chain runs to 510 residues: Alpha-L-arabinofuranosidase B (510 aa).

Residues 1 to 24 (MTMSRSSRSSVLALALATGSLVAA) form the signal peptide. The segment at 25 to 342 (GPCDIYSSGG…ADIVAAKYAT (318 aa)) is catalytic. Cystine bridges form between Cys27–Cys37, Cys87–Cys92, and Cys182–Cys183. Asn89 is a glycosylation site (N-linked (GlcNAc...) asparagine). Asp225 provides a ligand contact to substrate. Residue Glu227 is the Nucleophile of the active site. The substrate site is built by Asn228 and Gly303. Asp304 (proton donor) is an active-site residue. The tract at residues 343–510 (TSLISGPALT…VSWVVADGFA (168 aa)) is ABD. Cys412 and Cys450 are oxidised to a cystine. Substrate is bound by residues His427, Asn429, Phe430, Asp446, His475, Glu477, Leu480, and Asp500.

The protein belongs to the glycosyl hydrolase 54 family.

The protein localises to the secreted. The catalysed reaction is Hydrolysis of terminal non-reducing alpha-L-arabinofuranoside residues in alpha-L-arabinosides.. It participates in glycan metabolism; L-arabinan degradation. Its function is as follows. Alpha-L-arabinofuranosidase involved in the degradation of arabinoxylan, a major component of plant hemicellulose. Able to hydrolyze 1,5-, 1,3- and 1,2-alpha-linkages not only in L-arabinofuranosyl oligosaccharides, but also in polysaccharides containing terminal non-reducing L-arabinofuranoses in side chains, like L-arabinan, arabinogalactan and arabinoxylan. The sequence is that of Alpha-L-arabinofuranosidase B (abfB) from Emericella nidulans (strain FGSC A4 / ATCC 38163 / CBS 112.46 / NRRL 194 / M139) (Aspergillus nidulans).